The chain runs to 281 residues: 2-dehydro-3-deoxyphosphooctonate aldolase (281 aa).

It belongs to the KdsA family.

Its subcellular location is the cytoplasm. It carries out the reaction D-arabinose 5-phosphate + phosphoenolpyruvate + H2O = 3-deoxy-alpha-D-manno-2-octulosonate-8-phosphate + phosphate. Its pathway is carbohydrate biosynthesis; 3-deoxy-D-manno-octulosonate biosynthesis; 3-deoxy-D-manno-octulosonate from D-ribulose 5-phosphate: step 2/3. It functions in the pathway bacterial outer membrane biogenesis; lipopolysaccharide biosynthesis. The sequence is that of 2-dehydro-3-deoxyphosphooctonate aldolase from Pseudomonas savastanoi pv. phaseolicola (strain 1448A / Race 6) (Pseudomonas syringae pv. phaseolicola (strain 1448A / Race 6)).